We begin with the raw amino-acid sequence, 214 residues long: Heat shock 70 kDa protein cognate 1 (214 aa).

This sequence belongs to the heat shock protein 70 family.

The sequence is that of Heat shock 70 kDa protein cognate 1 (Hsc70-1) from Drosophila simulans (Fruit fly).